Consider the following 160-residue polypeptide: Ureidoglycolate lyase (160 aa).

The protein belongs to the ureidoglycolate lyase family. As to quaternary structure, homodimer. It depends on Ni(2+) as a cofactor.

It catalyses the reaction (S)-ureidoglycolate = urea + glyoxylate. It participates in nitrogen metabolism; (S)-allantoin degradation. In terms of biological role, catalyzes the catabolism of the allantoin degradation intermediate (S)-ureidoglycolate, generating urea and glyoxylate. Involved in the anaerobic utilization of allantoin as sole nitrogen source. Reinforces the induction of genes involved in the degradation of allantoin and glyoxylate by producing glyoxylate. The polypeptide is Ureidoglycolate lyase (Escherichia coli (strain K12 / MC4100 / BW2952)).